Consider the following 459-residue polypeptide: Argininosuccinate lyase (459 aa).

The protein belongs to the lyase 1 family. Argininosuccinate lyase subfamily.

Its subcellular location is the cytoplasm. It catalyses the reaction 2-(N(omega)-L-arginino)succinate = fumarate + L-arginine. The protein operates within amino-acid biosynthesis; L-arginine biosynthesis; L-arginine from L-ornithine and carbamoyl phosphate: step 3/3. This is Argininosuccinate lyase from Lactococcus lactis subsp. lactis (strain IL1403) (Streptococcus lactis).